Reading from the N-terminus, the 184-residue chain is Dual-action ribosomal maturation protein DarP (184 aa).

The disordered stretch occupies residues 1–27 (MSIPDTEIPVDDDGYDENGYDRPSKSQ). Positions 8–18 (IPVDDDGYDEN) are enriched in acidic residues.

The protein belongs to the DarP family.

The protein resides in the cytoplasm. In terms of biological role, member of a network of 50S ribosomal subunit biogenesis factors which assembles along the 30S-50S interface, preventing incorrect 23S rRNA structures from forming. Promotes peptidyl transferase center (PTC) maturation. The polypeptide is Dual-action ribosomal maturation protein DarP (Bordetella avium (strain 197N)).